A 51-amino-acid polypeptide reads, in one-letter code: Glutamate dehydrogenase (51 aa).

Residue Lys-31 coordinates substrate.

Belongs to the Glu/Leu/Phe/Val dehydrogenases family. As to quaternary structure, homohexamer.

The protein localises to the mitochondrion matrix. The catalysed reaction is L-glutamate + NAD(+) + H2O = 2-oxoglutarate + NH4(+) + NADH + H(+). It carries out the reaction L-glutamate + NADP(+) + H2O = 2-oxoglutarate + NH4(+) + NADPH + H(+). Functionally, mitochondrial glutamate dehydrogenase that converts L-glutamate into alpha-ketoglutarate. Plays a key role in glutamine anaplerosis by producing alpha-ketoglutarate, an important intermediate in the tricarboxylic acid cycle. The protein is Glutamate dehydrogenase of Electrophorus electricus (Electric eel).